A 624-amino-acid polypeptide reads, in one-letter code: UvrABC system protein C (624 aa).

The GIY-YIG domain maps to 25 to 104 (AEPGVYFMRD…IKQHQPHFNV (80 aa)). The UVR domain occupies 214-249 (SELIDTLTPQMEAAAENLNFEQAARIRDQINGLKTL).

Belongs to the UvrC family. As to quaternary structure, interacts with UvrB in an incision complex.

The protein localises to the cytoplasm. Its function is as follows. The UvrABC repair system catalyzes the recognition and processing of DNA lesions. UvrC both incises the 5' and 3' sides of the lesion. The N-terminal half is responsible for the 3' incision and the C-terminal half is responsible for the 5' incision. The polypeptide is UvrABC system protein C (Cyanothece sp. (strain PCC 7425 / ATCC 29141)).